A 439-amino-acid chain; its full sequence is GTPase Obg (439 aa).

Positions 5-164 (TDFFDQATIV…LTLELELKML (160 aa)) constitute an Obg domain. The 171-residue stretch at 165 to 335 (ADVGLVGFPN…LLQRVAELLR (171 aa)) folds into the OBG-type G domain. GTP contacts are provided by residues 171–178 (GFPNAGKS), 196–200 (FTTLT), 217–220 (DIPG), 287–290 (NKAD), and 316–318 (SAA). Mg(2+) is bound by residues S178 and T198. Positions 337–359 (DPPPQRDPVDPDEPPLEWPLPPV) are disordered. One can recognise an OCT domain in the interval 356 to 433 (LPPVDENAFT…IGRAELVWDD (78 aa)).

Belongs to the TRAFAC class OBG-HflX-like GTPase superfamily. OBG GTPase family. As to quaternary structure, monomer. Mg(2+) is required as a cofactor.

It localises to the cytoplasm. Its function is as follows. An essential GTPase which binds GTP, GDP and possibly (p)ppGpp with moderate affinity, with high nucleotide exchange rates and a fairly low GTP hydrolysis rate. Plays a role in control of the cell cycle, stress response, ribosome biogenesis and in those bacteria that undergo differentiation, in morphogenesis control. This Chloroflexus aggregans (strain MD-66 / DSM 9485) protein is GTPase Obg.